A 288-amino-acid chain; its full sequence is Fibroblast growth factor 2 (288 aa).

A propeptide spanning residues 1-142 (MVGVGGGDVE…TMAAGSITTL (142 aa)) is cleaved from the precursor. The tract at residues 1 to 156 (MVGVGGGDVE…EDGGSGAFPP (156 aa)) is disordered. Residues 72 to 84 (ERPSGSRLGDHGR) show a composition bias toward basic and acidic residues. Residues arginine 108, arginine 110, and arginine 112 each carry the omega-N-methylarginine; alternate modification. Residues arginine 108, arginine 110, and arginine 112 each carry the symmetric dimethylarginine; alternate modification. The span at 113 to 132 (GTAAPRAAPAARGSRPGPAG) shows a compositional bias: low complexity. Asparagine 169 provides a ligand contact to heparin. The Cell attachment site; atypical motif lies at 179 to 181 (DGR). Position 215 is a phosphotyrosine; by TEC (tyrosine 215). A Cell attachment site; atypical motif is present at residues 221–223 (DGR). Lysine 228 participates in a covalent cross-link: Glycyl lysine isopeptide (Lys-Gly) (interchain with G-Cter in SUMO1). Residues 261 to 277 (KRTGQYKLGSKTGPGQK) form a heparin-binding region.

The protein belongs to the heparin-binding growth factors family. Monomer. Homodimer. Interacts with FGFR1, FGFR2, FGFR3 and FGFR4. Affinity between fibroblast growth factors (FGFs) and their receptors is increased by heparan sulfate glycosaminoglycans that function as coreceptors. Interacts with CSPG4, FGFBP1 and TEC. Found in a complex with FGFBP1, FGF1 and FGF2. Interacts with FGFBP3. Interacts with integrin ITGAV:ITGB3; the interaction is required for FGF2 signaling. Interacts with SNORC (via the extracellular domain). Interacts with glypican GPC3. Phosphorylation at Tyr-215 regulates FGF2 unconventional secretion.

Its subcellular location is the secreted. It localises to the nucleus. In terms of biological role, acts as a ligand for FGFR1, FGFR2, FGFR3 and FGFR4. Also acts as an integrin ligand which is required for FGF2 signaling. Binds to integrin ITGAV:ITGB3. Plays an important role in the regulation of cell survival, cell division, cell differentiation and cell migration. Functions as a potent mitogen in vitro. Can induce angiogenesis. Mediates phosphorylation of ERK1/2 and thereby promotes retinal lens fiber differentiation. In Pan troglodytes (Chimpanzee), this protein is Fibroblast growth factor 2.